The chain runs to 138 residues: Basic phospholipase A2 vaspin B chain (138 aa).

The N-terminal stretch at 1–16 is a signal peptide; it reads MRILWIVAVCLIGVEG. Cystine bridges form between Cys-42/Cys-131, Cys-44/Cys-60, Cys-59/Cys-111, Cys-65/Cys-138, Cys-66/Cys-104, Cys-73/Cys-97, and Cys-91/Cys-102. Residues Tyr-43, Gly-45, and Gly-47 each contribute to the Ca(2+) site. The active site involves His-63. Asp-64 is a Ca(2+) binding site. Asp-105 is a catalytic residue.

This sequence belongs to the phospholipase A2 family. Group II subfamily. D49 sub-subfamily. Heterodimer of a weakly toxic basic protein having phospholipase A2 activity (B chain (AC Q8JFG1)) and a non-toxic acidic protein functioning as its inhibitor (A chain). The cofactor is Ca(2+). As to expression, expressed by the venom gland.

The protein resides in the secreted. It carries out the reaction a 1,2-diacyl-sn-glycero-3-phosphocholine + H2O = a 1-acyl-sn-glycero-3-phosphocholine + a fatty acid + H(+). Its function is as follows. Heterodimer: postsynaptic neurotoxin. Monomer: snake venom phospholipase A2 (PLA2) that shows postsynaptic neurotoxicity. PLA2 catalyzes the calcium-dependent hydrolysis of the 2-acyl groups in 3-sn-phosphoglycerides. The protein is Basic phospholipase A2 vaspin B chain of Vipera aspis aspis (Aspic viper).